The sequence spans 231 residues: MEKDNQPSIEELKAFLQKNNIEYKNIDLFIEATTHKTYSKVNKNSKDYERLEFLGDSLVGFLISDYCVREFSSLEPGELSRLRSKLVDKLALFKIAQKLKVEQIIKTGPKKARNEVLSSSNVLSDVVEALIAAIYLDQGMQSAKDFIKSHFYEIANKAQNKPNKDPKSELQEYFQTISAETVKYETIEIPNKRSFESKAWHLNKIYGTGVGLSKKDAEKNAAANALSKLKT.

The region spanning 12-139 is the RNase III domain; sequence LKAFLQKNNI…LIAAIYLDQG (128 aa). Glu-52 provides a ligand contact to Mg(2+). The active site involves Asp-56. Residues Asp-125 and Glu-128 each contribute to the Mg(2+) site. The active site involves Glu-128. Residues 165–231 form the DRBM domain; it reads DPKSELQEYF…AANALSKLKT (67 aa).

This sequence belongs to the ribonuclease III family. Homodimer. The cofactor is Mg(2+).

Its subcellular location is the cytoplasm. It catalyses the reaction Endonucleolytic cleavage to 5'-phosphomonoester.. In terms of biological role, digests double-stranded RNA. Involved in the processing of primary rRNA transcript to yield the immediate precursors to the large and small rRNAs (23S and 16S). Processes some mRNAs, and tRNAs when they are encoded in the rRNA operon. Processes pre-crRNA and tracrRNA of type II CRISPR loci if present in the organism. The sequence is that of Ribonuclease 3 from Mycoplasmopsis synoviae (strain 53) (Mycoplasma synoviae).